The chain runs to 74 residues: uncharacterized protein (74 aa).

This is an uncharacterized protein from Saccharolobus islandicus (Sulfolobus islandicus).